We begin with the raw amino-acid sequence, 208 residues long: Glycerol-3-phosphate acyltransferase (208 aa).

Transmembrane regions (helical) follow at residues 7-27 (PNIHFYLLAYFIGGIPFGYLL), 63-83 (MMAALTMLLDALKGALVILVA), 86-106 (AGMSVETQWAIAVLAVVGHCF), 123-143 (GVMAVMLPLEAAIGLVVWLVV), 149-169 (ISSLSSLLGLGALLISSFLIH), and 170-190 (PEIPEIGTHAPLLIIAFVIFY).

Belongs to the PlsY family. In terms of assembly, probably interacts with PlsX.

Its subcellular location is the cell inner membrane. The enzyme catalyses an acyl phosphate + sn-glycerol 3-phosphate = a 1-acyl-sn-glycero-3-phosphate + phosphate. The protein operates within lipid metabolism; phospholipid metabolism. In terms of biological role, catalyzes the transfer of an acyl group from acyl-phosphate (acyl-PO(4)) to glycerol-3-phosphate (G3P) to form lysophosphatidic acid (LPA). This enzyme utilizes acyl-phosphate as fatty acyl donor, but not acyl-CoA or acyl-ACP. The protein is Glycerol-3-phosphate acyltransferase of Wolinella succinogenes (strain ATCC 29543 / DSM 1740 / CCUG 13145 / JCM 31913 / LMG 7466 / NCTC 11488 / FDC 602W) (Vibrio succinogenes).